A 62-amino-acid chain; its full sequence is Photosystem II reaction center protein Z (62 aa).

2 helical membrane passes run 8 to 28 (TLFA…VVFA) and 41 to 61 (FSGI…NSFV).

This sequence belongs to the PsbZ family. As to quaternary structure, PSII is composed of 1 copy each of membrane proteins PsbA, PsbB, PsbC, PsbD, PsbE, PsbF, PsbH, PsbI, PsbJ, PsbK, PsbL, PsbM, PsbT, PsbY, PsbZ, Psb30/Ycf12, at least 3 peripheral proteins of the oxygen-evolving complex and a large number of cofactors. It forms dimeric complexes.

It localises to the plastid. Its subcellular location is the chloroplast thylakoid membrane. Its function is as follows. May control the interaction of photosystem II (PSII) cores with the light-harvesting antenna, regulates electron flow through the 2 photosystem reaction centers. PSII is a light-driven water plastoquinone oxidoreductase, using light energy to abstract electrons from H(2)O, generating a proton gradient subsequently used for ATP formation. This Tupiella akineta (Green alga) protein is Photosystem II reaction center protein Z.